We begin with the raw amino-acid sequence, 567 residues long: SRSF protein kinase 3 (567 aa).

Over residues Met1–Gly16 the composition is skewed to gly residues. The tract at residues Met1–Leu36 is disordered. A compositionally biased stretch (low complexity) spans Ser17–Ser32. At Ser50 the chain carries Phosphoserine. One can recognise a Protein kinase domain in the interval Tyr79–Leu565. Residues Leu85 to Val93 and Lys108 each bind ATP. The Proton acceptor role is filled by Asp212. Disordered stretches follow at residues Gln238 to Glu283 and Ala298 to Ser351. Residues Ser248–Leu258 are compositionally biased toward polar residues. The span at Ser264 to Lys279 shows a compositional bias: basic residues. The segment covering Ala327–Ser348 has biased composition (low complexity). Ser330 carries the phosphoserine modification.

The protein belongs to the protein kinase superfamily. CMGC Ser/Thr protein kinase family. Expressed in skeletal and heart muscle. Also expressed in the fetal brain.

Its subcellular location is the nucleus. The protein resides in the cytoplasm. It carries out the reaction L-seryl-[protein] + ATP = O-phospho-L-seryl-[protein] + ADP + H(+). It catalyses the reaction L-threonyl-[protein] + ATP = O-phospho-L-threonyl-[protein] + ADP + H(+). Its function is as follows. Serine/arginine-rich protein-specific kinase which specifically phosphorylates its substrates at serine residues located in regions rich in arginine/serine dipeptides, known as RS domains. Phosphorylates the SR splicing factor SRSF1 and the lamin-B receptor (LBR) in vitro. Required for normal muscle development. The protein is SRSF protein kinase 3 (SRPK3) of Homo sapiens (Human).